A 242-amino-acid chain; its full sequence is MPYKRKLTSYFPQSKRFRGAKSGMAVVKTSASRRLYKKGKRKPDRIKTYTYAFSSICTDKGTIVYMNSWSLGLGPQQRSSDIEILKSMYIRLTVALSENAASQVKTYVVKWALIVDQVPGETLVGVADVYKTCPSPYPYVQCAYIADDNHSRFQVLRSGFLSLSGNGLAVGSSTRTGCPAMKNMASINKFCKNLNVRCVYDADSATGDIASIKRGAVYLVIWPDVEIRYGFSCTMYHRNGNA.

A Bipartite nuclear localization signal motif is present at residues 1–42 (MPYKRKLTSYFPQSKRFRGAKSGMAVVKTSASRRLYKKGKRK).

This sequence belongs to the geminiviridae capsid protein family. Homomultimer. Binds to single-stranded and double-stranded viral DNA. Interacts (via nuclear localization signal) with host importin alpha-1a.

Its subcellular location is the virion. The protein localises to the host nucleus. Encapsidates the viral genome into characteristic twinned ('geminate') particles. Binds the genomic viral ssDNA and shuttles it into and out of the cell nucleus. Plays a role in protection of the genome from degradation, virus acquisition and transmission by insect vectors, infectivity, and systemic movement. The CP of monopartite geminiviruses is absolutely essential for virus movement. The protein is Capsid protein of Solanum lycopersicum (Tomato).